The chain runs to 176 residues: Probable Brix domain-containing ribosomal biogenesis protein (176 aa).

The Brix domain occupies 6–176 (IEIVFTSSRD…QLYDRNKNIN (171 aa)).

In terms of biological role, probably involved in the biogenesis of the ribosome. The chain is Probable Brix domain-containing ribosomal biogenesis protein from Sulfurisphaera tokodaii (strain DSM 16993 / JCM 10545 / NBRC 100140 / 7) (Sulfolobus tokodaii).